Reading from the N-terminus, the 133-residue chain is Small ribosomal subunit protein uS11 (133 aa).

This sequence belongs to the universal ribosomal protein uS11 family. As to quaternary structure, part of the 30S ribosomal subunit. Interacts with proteins S7 and S18. Binds to IF-3.

Functionally, located on the platform of the 30S subunit, it bridges several disparate RNA helices of the 16S rRNA. Forms part of the Shine-Dalgarno cleft in the 70S ribosome. The chain is Small ribosomal subunit protein uS11 from Chlamydia pneumoniae (Chlamydophila pneumoniae).